The sequence spans 438 residues: MPYFPDIERIRYEGPASDSPLAFRHYDADKIILGKPMREHLRMAACYWHTFVWPGSDVFGAGTFKRPWQHAGDPMELAIGKAQAAFEFFSKLGIDYYCFHDTDVAPEGNSLKEYRNHFAQMIDHLERHQEESGIKLLWGTANCFSNPRFAAGAASNPDPEVFACAAAQVFSAMNATQRLKGANYVLWGGREGYETLLNTDLKREREQLGRFMRMVVEHKYKIGFKGDLLIEPKPQEPTKHQYDYDSATVFGFLQQFGLEKEIKVNIEANHATLAGHSFHHEVATAVSLGIFGSIDANRGDPQNGWDTDQFPNSVEEMTLVTYEILKAGGFGNGGFNFDSKVRRQSLDETDLFHGHVGAMDVLALSLERAAAMVQNDQLQRLKDQRYAGWQQPFGQSVLAGDFNLQSLAEHAFANELNPQAVSGRQEMLENVVNRFIYR.

Active-site residues include histidine 100 and aspartate 103. Mg(2+) contacts are provided by glutamate 231, glutamate 267, histidine 270, aspartate 295, aspartate 306, aspartate 308, and aspartate 338.

The protein belongs to the xylose isomerase family. As to quaternary structure, homotetramer. The cofactor is Mg(2+).

It localises to the cytoplasm. It catalyses the reaction alpha-D-xylose = alpha-D-xylulofuranose. In Pseudomonas fluorescens (strain Pf0-1), this protein is Xylose isomerase.